We begin with the raw amino-acid sequence, 326 residues long: MQSATEFLKPRIVEVDRASPLHAKVIMEPFERGYGHTLGNALRRILLSSMVGYAPTEVAISGVVHEYSTIEGVQEDVVDILLNLKGIAFKMHGKAEAILKVSKSGEGVVTAGDIEVGHDIEVLNPDHVIAHLTKGGKLDMEIKIEAGRGYQPATARKVSEETRAVGSILVDASFSPVRRVAYAVESARVEQRTDLDRLVIDIETNGVVEPEEAVRTAARILVSQLSVFADLEGTPAESESPRSPQVDPLLLRPVDDLELTVRSANCLKAENIYFIGDLIQRSETELLRTPNLGRKSLNEIKDVLASKGLSLGMKLENWPPAGLERP.

The segment at 1–232 (MQSATEFLKP…SQLSVFADLE (232 aa)) is alpha N-terminal domain (alpha-NTD). An alpha C-terminal domain (alpha-CTD) region spans residues 246–326 (VDPLLLRPVD…NWPPAGLERP (81 aa)).

The protein belongs to the RNA polymerase alpha chain family. In terms of assembly, homodimer. The RNAP catalytic core consists of 2 alpha, 1 beta, 1 beta' and 1 omega subunit. When a sigma factor is associated with the core the holoenzyme is formed, which can initiate transcription.

The catalysed reaction is RNA(n) + a ribonucleoside 5'-triphosphate = RNA(n+1) + diphosphate. Functionally, DNA-dependent RNA polymerase catalyzes the transcription of DNA into RNA using the four ribonucleoside triphosphates as substrates. This chain is DNA-directed RNA polymerase subunit alpha, found in Thiobacillus denitrificans (strain ATCC 25259 / T1).